We begin with the raw amino-acid sequence, 449 residues long: Protein phosphatase fem-2 (449 aa).

The interval 28-34 (EEAFADE) is interaction with fem-1 and fem-3. The tract at residues 54-56 (IRF) is interaction with fem-3. The region spanning 160-424 (GIHVSGDQLK…DNVSVVIGFL (265 aa)) is the PPM-type phosphatase domain. Residues aspartate 202, glycine 203, aspartate 370, and aspartate 415 each contribute to the Mg(2+) site.

It belongs to the PP2C family. Component of a complex containing fem-1, fem-2 and fem-3. Interacts (via N-terminus) with fem-1 and fem-3. Component of the CBC(fem-1) E3 ubiquitin-protein ligase complex, at least composed of cul-2, elc-1, tra-1, fem-1, fem-2 and fem-3; mediates the ubiquitination and subsequent proteasomal degradation of tra-1. Interacts with tra-1. Interacts with sel-10. Mg(2+) serves as cofactor. Mn(2+) is required as a cofactor.

The enzyme catalyses O-phospho-L-seryl-[protein] + H2O = L-seryl-[protein] + phosphate. The catalysed reaction is O-phospho-L-threonyl-[protein] + H2O = L-threonyl-[protein] + phosphate. Its function is as follows. Dephosphorylates auto-phosphorylated Ca(2+)/calmodulin-dependent protein kinase unc-43/CAMKII in vitro. Involved in the regulation of sex determination. Together with fem-3, required for male sexual development by promoting the proteasomal-mediated degradation of tra-1, a transcription repressor of male-specific genes. Promotes apoptosis. The sequence is that of Protein phosphatase fem-2 from Caenorhabditis elegans.